The following is a 162-amino-acid chain: Ribosome maturation factor RimM (162 aa).

In terms of domain architecture, PRC barrel spans 90-161 (EDCYYEADIV…KIIIKPLEVW (72 aa)).

Belongs to the RimM family. Binds ribosomal protein uS19.

It localises to the cytoplasm. Functionally, an accessory protein needed during the final step in the assembly of 30S ribosomal subunit, possibly for assembly of the head region. Essential for efficient processing of 16S rRNA. May be needed both before and after RbfA during the maturation of 16S rRNA. It has affinity for free ribosomal 30S subunits but not for 70S ribosomes. This chain is Ribosome maturation factor RimM, found in Clostridium novyi (strain NT).